We begin with the raw amino-acid sequence, 376 residues long: MSYMMAKTLEEQSLRECEHYIQTHGIQRVLKDCIVQLCVCRPENPVQFLRQYFQKLEREQVKLDASRQVISPDDCEDLSPMPQTAAPPVRRRGGISAEPVTEEDATNYVKKVVPKDYKTMNALSKAIAKNVLFAHLDESERSDIFDAMFPVNHIAGENIIQQGDEGDNFYVIDVGEVDVFVNSELVTTISEGGSFGELALIYGTPRAATVRAKTDVKLWGIDRDSYRRILMGSTIRKRKMYEEFLSRVSILESLDKWERLTVADSLETCSFDDGETIVKQGAAGDDFYIILEGCAVVLQQRSEGEDPAEVGRLGSSDYFGEIALLLDRPRAATVVARGPLKCVKLDRARFERVLGPCADILKRNITQYNSFVSLSV.

The tract at residues 1 to 131 is dimerization and phosphorylation; it reads MSYMMAKTLE…ALSKAIAKNV (131 aa). The disordered stretch occupies residues 72–93; sequence PDDCEDLSPMPQTAAPPVRRRG. The short motif at 91 to 95 is the Pseudophosphorylation motif element; that stretch reads RRGGI. Serine 96 carries the phosphoserine modification. 3',5'-cyclic AMP-binding positions include 132-247, glutamate 197, arginine 206, 250-371, glutamate 321, and arginine 330; these read LFAH…FLSR and ILES…YNSF.

This sequence belongs to the cAMP-dependent kinase regulatory chain family. In terms of assembly, tetramer, composed of 2 regulatory (R) and 2 catalytic (C) subunits. In the presence of cAMP it dissociates into 2 active monomeric C subunits and an R dimer. Post-translationally, the pseudophosphorylation site binds to the substrate-binding region of the catalytic chain but is not phosphorylated. The physiological significance of phosphorylations by other kinases is unclear.

This Drosophila melanogaster (Fruit fly) protein is cAMP-dependent protein kinase type I regulatory subunit (Pka-R1).